Reading from the N-terminus, the 209-residue chain is Molybdenum cofactor guanylyltransferase (209 aa).

GTP is bound by residues 16 to 18 (LAG), K28, N56, D69, and D103. D103 is a binding site for Mg(2+).

It belongs to the MobA family. As to quaternary structure, monomer. The cofactor is Mg(2+).

The protein localises to the cytoplasm. The catalysed reaction is Mo-molybdopterin + GTP + H(+) = Mo-molybdopterin guanine dinucleotide + diphosphate. Transfers a GMP moiety from GTP to Mo-molybdopterin (Mo-MPT) cofactor (Moco or molybdenum cofactor) to form Mo-molybdopterin guanine dinucleotide (Mo-MGD) cofactor. In Rhizobium leguminosarum bv. trifolii (strain WSM2304), this protein is Molybdenum cofactor guanylyltransferase.